Here is a 370-residue protein sequence, read N- to C-terminus: Phosphate-binding protein PstS 2 (370 aa).

Residues 1-22 form the signal peptide; it reads MKFARSGAAVSLLAAGTLVLTA. Cys-23 carries N-palmitoyl cysteine lipidation. Cys-23 carries the S-diacylglycerol cysteine lipid modification. Residues 54 to 56, Ser-84, Asp-102, and 191 to 193 contribute to the phosphate site; these read STA and SGT.

It belongs to the PstS family. The complex is composed of two ATP-binding proteins (PstB), two transmembrane proteins (PstC and PstA) and a solute-binding protein (PstS).

It localises to the cell membrane. Its function is as follows. Functions in inorganic phosphate uptake, although probably not the main uptake protein under phosphate starvation. Part of the ABC transporter complex PstSACB involved in phosphate import. The chain is Phosphate-binding protein PstS 2 (pstS2) from Mycobacterium tuberculosis (strain ATCC 25618 / H37Rv).